Reading from the N-terminus, the 138-residue chain is Putative membrane protein insertion efficiency factor (138 aa).

The segment at 71–138 (YDPVPGTPEA…GTPSHTRGEN (68 aa)) is disordered. A compositionally biased stretch (basic and acidic residues) spans 81–113 (RQWRELHPETARSKNEPIHDLTDDNPRDHEPAL). Residues 123–138 (PGSTHTGTPSHTRGEN) show a composition bias toward polar residues.

The protein belongs to the UPF0161 family.

It localises to the cell membrane. Could be involved in insertion of integral membrane proteins into the membrane. This Cutibacterium acnes (strain DSM 16379 / KPA171202) (Propionibacterium acnes) protein is Putative membrane protein insertion efficiency factor.